A 336-amino-acid chain; its full sequence is Phospho-N-acetylmuramoyl-pentapeptide-transferase (336 aa).

The next 10 helical transmembrane spans lie at 3-23 (LTLIAAIISFMVSAFTMPYFI), 53-73 (GGTVFLLVATAVSLLVSLFSI), 78-98 (SLALISGILSIVVIYGIIGFL), 118-138 (LALQLVGGLMFYFLHVSPSGI), 143-163 (VFGYQLPLGIFYLFFVLFWVV), 174-194 (GIDGLASISVVISLVTYGVIA), 200-220 (FDVLLLIGAMIGALLGFFCFN), 226-246 (VFMGDVGSLALGAMLAAISIA), 251-271 (WTLLIIGIVYVLETSSVMLQV), and 316-336 (AFLWGVGSLASLLVLAILYVF).

Belongs to the glycosyltransferase 4 family. MraY subfamily. It depends on Mg(2+) as a cofactor.

The protein localises to the cell membrane. It catalyses the reaction UDP-N-acetyl-alpha-D-muramoyl-L-alanyl-gamma-D-glutamyl-L-lysyl-D-alanyl-D-alanine + di-trans,octa-cis-undecaprenyl phosphate = Mur2Ac(oyl-L-Ala-gamma-D-Glu-L-Lys-D-Ala-D-Ala)-di-trans,octa-cis-undecaprenyl diphosphate + UMP. It participates in cell wall biogenesis; peptidoglycan biosynthesis. Catalyzes the initial step of the lipid cycle reactions in the biosynthesis of the cell wall peptidoglycan: transfers peptidoglycan precursor phospho-MurNAc-pentapeptide from UDP-MurNAc-pentapeptide onto the lipid carrier undecaprenyl phosphate, yielding undecaprenyl-pyrophosphoryl-MurNAc-pentapeptide, known as lipid I. In Streptococcus pyogenes serotype M1, this protein is Phospho-N-acetylmuramoyl-pentapeptide-transferase.